The chain runs to 1151 residues: SCF E3 ubiquitin ligase complex F-box protein GRR1 (1151 aa).

Residues 1 to 18 (MDQDNNNHNDSNRLHPPD) show a composition bias toward basic and acidic residues. The segment at 1 to 72 (MDQDNNNHND…ATSERNASEV (72 aa)) is disordered. The segment covering 38-49 (NNNNNNNNNNNN) has biased composition (low complexity). A compositionally biased stretch (basic and acidic residues) spans 58–72 (RTRETATSERNASEV). 2 positions are modified to phosphoserine: Ser199 and Ser300. Residues 314–361 (VFALNMLPSEILHLILDKLNQKYDIVKFLTVSKLWAEIIVKILYYRPH) form the F-box domain. LRR repeat units follow at residues 399–423 (GDYMHDTELNYFVGCKNLERLTLVF), 424–449 (CKHITSVPISAVLRGCKFLQSVDITG), 450–475 (IRDVSDDVFDTLATYCPRVQGFYVPQ), 476–501 (ARNVTFDSLRNFIVHSPMLKRIKITA), 502–527 (NNNMNDELVELLANKCPLLVEVDITL), 528–553 (SPNVTDSSLLKLLTRLVQLREFRITH), 554–582 (NTNITDNLFQELSKVVDDMPSLRLIDLSG), 583–608 (CENITDKTIESIVNLAPKLRNVFLGK), 609–634 (CSRITDASLFQLSKLGKNLQTVHFGH), 635–660 (CFNITDNGVRALFHSCTRIQYVDFAC), 661–685 (CTNLTNRTLYELADLPKLKRIGLVK), 686–714 (CTQMTDEGLLNMVSLRGRNDTLERVHLSY), and 715–740 (CSNLTIYPIYELLMSCPRLSHLSLTA). The segment covering 1066 to 1080 (AGANDTSNNETNNGN) has biased composition (low complexity). 2 disordered regions span residues 1066–1090 (AGANDTSNNETNNGNDDNETENPNF) and 1118–1151 (VRNNNNNTIDESMPDTAIDSQMDEASGTPDEDML).

In terms of assembly, interacts with SKP1. Component of the probable SCF(GRR1) complex containing CDC53, SKP1, RBX1 and GRR1.

It localises to the membrane. Its pathway is protein modification; protein ubiquitination. In terms of biological role, substrate recognition component of a SCF (SKP1-CUL1-F-box protein) E3 ubiquitin-protein ligase complex which mediates the ubiquitination and subsequent proteasomal degradation of target proteins. Recognizes and directs ubiquitination of phosphorylated CLN1, CLN2 and GIC2. Probably constitutes the primary response element required for the generation or interpretation of the signal that induces glucose repression. This chain is SCF E3 ubiquitin ligase complex F-box protein GRR1 (GRR1), found in Saccharomyces cerevisiae (strain ATCC 204508 / S288c) (Baker's yeast).